We begin with the raw amino-acid sequence, 372 residues long: MLVAVVKELKQGEGRVACTPENVRKLTDAGHKVIVEKNAGIGSGFSNDMYEKEGAKIVTHEQAWEADLVIKVKEPHESEYQYFKKNQIIWGFLHLASSKEIVEKMQEVGVTAISGETIIKNGKAELLAPMSAIAGQRSAIMGAYYSEAQHGGQGTLVTGVHENVDIPGSTYVIFGGGVAATNAANVALGLNAKVIIIELNDDRIKYLEDMYAEKDVTVVKSTPENLAEQIKKADVFISTILIPGAKPPKLVTREMVKSMKKGSVLIDIAIDQGGTIETIRPTTISDPVYEEEGVIHYGVPNQPGAVPRTSTMALAQGNIDYILEICDKGLEQAIKDNEALSTGVNIYQGQVTNQGLATSHDLDYKEILNVIE.

The active site involves histidine 94. NAD(+) is bound at residue 170–200 (TYVIFGGGVAATNAANVALGLNAKVIIIELN).

The protein belongs to the AlaDH/PNT family.

It catalyses the reaction L-alanine + NAD(+) + H2O = pyruvate + NH4(+) + NADH + H(+). The protein operates within amino-acid degradation; L-alanine degradation via dehydrogenase pathway; NH(3) and pyruvate from L-alanine: step 1/1. Functionally, may play a role in cell wall synthesis as L-alanine is an important constituent of the peptidoglycan layer. The sequence is that of Alanine dehydrogenase 1 (ald1) from Staphylococcus aureus (strain MRSA252).